A 212-amino-acid polypeptide reads, in one-letter code: MKMMSTRALALGAAAVLAFAAATAQAQRCGEQGSNMECPNNLCCSQYGYCGMGGDYCGKGCQNGACWTSKRCGSQAGGATCTNNQCCSQYGYCGFGAEYCGAGCQGGPCRADIKCGSQAGGKLCPNNLCCSQWGFCGLGSEFCGGGCQSGACSTDKPCGKDAGGRVCTNNYCCSKWGSCGIGPGYCGAGCQSGGCDGVFAEAITANSTLLQE.

An N-terminal signal peptide occupies residues methionine 1–alanine 26. Position 27 is a pyrrolidone carboxylic acid (glutamine 27). Chitin-binding type-1 domains follow at residues glutamine 27 to threonine 68, serine 69 to alanine 111, aspartate 112 to threonine 154, and aspartate 155 to glycine 197. Intrachain disulfides connect cysteine 29-cysteine 44, cysteine 38-cysteine 50, cysteine 43-cysteine 57, cysteine 61-cysteine 66, cysteine 72-cysteine 87, cysteine 81-cysteine 93, cysteine 86-cysteine 100, cysteine 104-cysteine 109, cysteine 115-cysteine 130, cysteine 124-cysteine 136, cysteine 129-cysteine 143, cysteine 147-cysteine 152, cysteine 158-cysteine 173, cysteine 167-cysteine 179, cysteine 172-cysteine 186, and cysteine 190-cysteine 195. Substrate is bound at residue methionine 36–cysteine 38. Serine 88 to tyrosine 99 provides a ligand contact to substrate. Residue serine 140 to glutamate 141 participates in substrate binding. Residues valine 198–glutamate 212 constitute a propeptide that is removed on maturation.

In terms of assembly, homodimer, u-shaped.

In terms of biological role, N-acetyl-D-glucosamine / N-acetyl-D-neuraminic acid binding lectin. The protein is Agglutinin isolectin 1 of Triticum aestivum (Wheat).